A 287-amino-acid chain; its full sequence is Large ribosomal subunit protein uL2 (287 aa).

Composition is skewed to basic residues over residues 209–220 (GRNRWKARRPKV) and 258–287 (KTRK…GRQS). Positions 209–287 (GRNRWKARRP…SKRSRGGRQS (79 aa)) are disordered.

Belongs to the universal ribosomal protein uL2 family. Part of the 50S ribosomal subunit. Forms a bridge to the 30S subunit in the 70S ribosome.

Functionally, one of the primary rRNA binding proteins. Required for association of the 30S and 50S subunits to form the 70S ribosome, for tRNA binding and peptide bond formation. It has been suggested to have peptidyltransferase activity; this is somewhat controversial. Makes several contacts with the 16S rRNA in the 70S ribosome. In Acaryochloris marina (strain MBIC 11017), this protein is Large ribosomal subunit protein uL2.